Here is a 210-residue protein sequence, read N- to C-terminus: Small ribosomal subunit protein uS3 (210 aa).

The region spanning Ile38 to Arg106 is the KH type-2 domain.

Belongs to the universal ribosomal protein uS3 family. Part of the 30S ribosomal subunit. Forms a tight complex with proteins S10 and S14.

Binds the lower part of the 30S subunit head. Binds mRNA in the 70S ribosome, positioning it for translation. The protein is Small ribosomal subunit protein uS3 of Trichlorobacter lovleyi (strain ATCC BAA-1151 / DSM 17278 / SZ) (Geobacter lovleyi).